The following is a 319-amino-acid chain: NH(3)-dependent NAD(+) synthetase (319 aa).

Position 33 to 40 (33 to 40) interacts with ATP; that stretch reads GLSGGIDS. Asp-39 is a Mg(2+) binding site. Position 169 (Arg-169) interacts with deamido-NAD(+). Thr-189 lines the ATP pocket. Glu-194 is a Mg(2+) binding site. The deamido-NAD(+) site is built by Lys-202 and Asp-209. ATP-binding residues include Lys-218 and Thr-240.

The protein belongs to the NAD synthetase family. In terms of assembly, homodimer.

The enzyme catalyses deamido-NAD(+) + NH4(+) + ATP = AMP + diphosphate + NAD(+) + H(+). It functions in the pathway cofactor biosynthesis; NAD(+) biosynthesis; NAD(+) from deamido-NAD(+) (ammonia route): step 1/1. In terms of biological role, catalyzes the ATP-dependent amidation of deamido-NAD to form NAD. Uses ammonia as a nitrogen source. The protein is NH(3)-dependent NAD(+) synthetase of Mesorhizobium japonicum (strain LMG 29417 / CECT 9101 / MAFF 303099) (Mesorhizobium loti (strain MAFF 303099)).